Consider the following 271-residue polypeptide: Tryptophan synthase alpha chain (271 aa).

Active-site proton acceptor residues include glutamate 49 and aspartate 60.

The protein belongs to the TrpA family. As to quaternary structure, tetramer of two alpha and two beta chains.

The catalysed reaction is (1S,2R)-1-C-(indol-3-yl)glycerol 3-phosphate + L-serine = D-glyceraldehyde 3-phosphate + L-tryptophan + H2O. It functions in the pathway amino-acid biosynthesis; L-tryptophan biosynthesis; L-tryptophan from chorismate: step 5/5. In terms of biological role, the alpha subunit is responsible for the aldol cleavage of indoleglycerol phosphate to indole and glyceraldehyde 3-phosphate. This is Tryptophan synthase alpha chain from Yersinia pestis bv. Antiqua (strain Angola).